The sequence spans 93 residues: SH3 domain-binding glutamic acid-rich-like protein 3 (93 aa).

Position 2 is an N-acetylserine (serine 2). A Glutaredoxin domain is found at 2–93 (SGLRVYSTSV…NTLQEFLKLA (92 aa)). Threonine 9 carries O-linked (GalNAc...) threonine glycosylation.

It belongs to the SH3BGR family. Interacts with MYO1C (via its IQ motifs); the interaction is dependent on calcium and takes place at membrane ruffles. Post-translationally, may be glycosylated. In terms of tissue distribution, expressed in heart, liver, lung, kidney, spleen, thymus, ovarian follicles, skeletal muscle, brain, lymph node and mammary epithelial and stromal cells (at protein level).

The protein localises to the cytoplasm. It localises to the cytosol. Its subcellular location is the cell projection. It is found in the ruffle membrane. The protein resides in the nucleus. Could act as a modulator of glutaredoxin biological activity. May play a role in cytoskeleton organization. In Rattus norvegicus (Rat), this protein is SH3 domain-binding glutamic acid-rich-like protein 3.